The following is a 156-amino-acid chain: 6,7-dimethyl-8-ribityllumazine synthase (156 aa).

5-amino-6-(D-ribitylamino)uracil is bound by residues Trp22, 56–58, and 80–82; these read AYE and AVI. 85 to 86 is a binding site for (2S)-2-hydroxy-3-oxobutyl phosphate; sequence DT. The Proton donor role is filled by His88. Phe113 lines the 5-amino-6-(D-ribitylamino)uracil pocket. Arg127 contacts (2S)-2-hydroxy-3-oxobutyl phosphate.

It belongs to the DMRL synthase family.

It carries out the reaction (2S)-2-hydroxy-3-oxobutyl phosphate + 5-amino-6-(D-ribitylamino)uracil = 6,7-dimethyl-8-(1-D-ribityl)lumazine + phosphate + 2 H2O + H(+). Its pathway is cofactor biosynthesis; riboflavin biosynthesis; riboflavin from 2-hydroxy-3-oxobutyl phosphate and 5-amino-6-(D-ribitylamino)uracil: step 1/2. Catalyzes the formation of 6,7-dimethyl-8-ribityllumazine by condensation of 5-amino-6-(D-ribitylamino)uracil with 3,4-dihydroxy-2-butanone 4-phosphate. This is the penultimate step in the biosynthesis of riboflavin. In Deinococcus deserti (strain DSM 17065 / CIP 109153 / LMG 22923 / VCD115), this protein is 6,7-dimethyl-8-ribityllumazine synthase.